A 196-amino-acid polypeptide reads, in one-letter code: Adenylate kinase (196 aa).

ATP is bound at residue 9–17 (GIPGVGKST).

This sequence belongs to the archaeal adenylate kinase family.

The protein resides in the cytoplasm. It catalyses the reaction AMP + ATP = 2 ADP. This chain is Adenylate kinase (adkA), found in Pyrococcus horikoshii (strain ATCC 700860 / DSM 12428 / JCM 9974 / NBRC 100139 / OT-3).